A 382-amino-acid chain; its full sequence is D-galactonate dehydratase (382 aa).

Mg(2+) is bound at residue aspartate 183. Histidine 185 functions as the Proton donor in the catalytic mechanism. Glutamate 209 and glutamate 235 together coordinate Mg(2+). Histidine 285 (proton acceptor) is an active-site residue.

Belongs to the mandelate racemase/muconate lactonizing enzyme family. GalD subfamily. Requires Mg(2+) as cofactor.

It catalyses the reaction D-galactonate = 2-dehydro-3-deoxy-D-galactonate + H2O. It participates in carbohydrate acid metabolism; D-galactonate degradation; D-glyceraldehyde 3-phosphate and pyruvate from D-galactonate: step 1/3. In terms of biological role, catalyzes the dehydration of D-galactonate to 2-keto-3-deoxy-D-galactonate. This chain is D-galactonate dehydratase, found in Ralstonia nicotianae (strain ATCC BAA-1114 / GMI1000) (Ralstonia solanacearum).